A 334-amino-acid chain; its full sequence is Zinc-finger homeodomain protein 10 (334 aa).

The span at 1–15 shows a compositional bias: low complexity; the sequence is MMDMTPTITTTTTPT. Disordered regions lie at residues 1–33 and 103–164; these read MMDM…QPAK and FHRR…LLSL. Residues 56-107 form a ZF-HD dimerization-type; degenerate zinc finger; that stretch reads YKECLKNHAAALGGHALDGCGEFMPSPSSISSDPTSLKCAACGCHRNFHRRD. Positions 136–155 are enriched in pro residues; that stretch reads PPPPPPPPPRSPNSASPPPI. The segment at residues 200–263 is a DNA-binding region (homeobox); the sequence is RKRFRTKFSQ…NNKNTFNRRD (64 aa). Residues 292-334 form a disordered region; the sequence is NGHHGVGGGGELHQSVSSGGGGGGFDSDSGGANGGNVNGSSSS. Residues 309–328 are compositionally biased toward gly residues; the sequence is SGGGGGGFDSDSGGANGGNV.

As to quaternary structure, homo- and heterodimer with other ZFHD proteins. Interacts with MIF1, MIF2 and MIF3; these interactions prevent nuclear localization and DNA-binding to inhibit transcription regulation activity. Binds to ZHD1, ZHD2, ZHD4, ZHD5, ZHD6, ZHD7 and ZHD8. Interacts with KIN10 and KIN11. In terms of tissue distribution, mostly expressed in rosettes (e.g. young leaves), flowers (e.g. styles), siliques and inflorescence.

It localises to the nucleus. Putative transcription factor. Probably involved in establishing polarity during leaf development through the gibberellic acid (GA) signaling pathway. In Arabidopsis thaliana (Mouse-ear cress), this protein is Zinc-finger homeodomain protein 10 (ZHD10).